Here is a 201-residue protein sequence, read N- to C-terminus: Potassium-transporting ATPase KdpC subunit (201 aa).

Residues 7 to 29 (PALVLLTALTAITGLAYPLAMTG) form a helical membrane-spanning segment.

This sequence belongs to the KdpC family. In terms of assembly, the system is composed of three essential subunits: KdpA, KdpB and KdpC.

The protein resides in the cell inner membrane. Functionally, part of the high-affinity ATP-driven potassium transport (or Kdp) system, which catalyzes the hydrolysis of ATP coupled with the electrogenic transport of potassium into the cytoplasm. This subunit acts as a catalytic chaperone that increases the ATP-binding affinity of the ATP-hydrolyzing subunit KdpB by the formation of a transient KdpB/KdpC/ATP ternary complex. This chain is Potassium-transporting ATPase KdpC subunit, found in Methylobacterium radiotolerans (strain ATCC 27329 / DSM 1819 / JCM 2831 / NBRC 15690 / NCIMB 10815 / 0-1).